The sequence spans 339 residues: Glycerol-3-phosphate dehydrogenase [NAD(P)+] (339 aa).

The NADPH site is built by Ser-15, Tyr-16, His-36, and Lys-110. Sn-glycerol 3-phosphate contacts are provided by Lys-110, Gly-139, and Thr-141. NADPH is bound at residue Ala-143. Positions 195, 248, 258, 259, and 260 each coordinate sn-glycerol 3-phosphate. Catalysis depends on Lys-195, which acts as the Proton acceptor. Residue Arg-259 participates in NADPH binding. NADPH contacts are provided by Val-283 and Glu-285.

This sequence belongs to the NAD-dependent glycerol-3-phosphate dehydrogenase family.

The protein resides in the cytoplasm. The catalysed reaction is sn-glycerol 3-phosphate + NAD(+) = dihydroxyacetone phosphate + NADH + H(+). It carries out the reaction sn-glycerol 3-phosphate + NADP(+) = dihydroxyacetone phosphate + NADPH + H(+). It functions in the pathway membrane lipid metabolism; glycerophospholipid metabolism. Catalyzes the reduction of the glycolytic intermediate dihydroxyacetone phosphate (DHAP) to sn-glycerol 3-phosphate (G3P), the key precursor for phospholipid synthesis. The protein is Glycerol-3-phosphate dehydrogenase [NAD(P)+] of Pectobacterium carotovorum subsp. carotovorum (strain PC1).